Reading from the N-terminus, the 439-residue chain is Ribosomal protein uS12 methylthiotransferase RimO (439 aa).

The MTTase N-terminal domain occupies lysine 7 to asparagine 119. 6 residues coordinate [4Fe-4S] cluster: cysteine 16, cysteine 50, cysteine 82, cysteine 151, cysteine 155, and cysteine 158. The region spanning threonine 137–lysine 368 is the Radical SAM core domain.

This sequence belongs to the methylthiotransferase family. RimO subfamily. [4Fe-4S] cluster is required as a cofactor.

It is found in the cytoplasm. It catalyses the reaction L-aspartate(89)-[ribosomal protein uS12]-hydrogen + (sulfur carrier)-SH + AH2 + 2 S-adenosyl-L-methionine = 3-methylsulfanyl-L-aspartate(89)-[ribosomal protein uS12]-hydrogen + (sulfur carrier)-H + 5'-deoxyadenosine + L-methionine + A + S-adenosyl-L-homocysteine + 2 H(+). In terms of biological role, catalyzes the methylthiolation of an aspartic acid residue of ribosomal protein uS12. This Helicobacter pylori (strain P12) protein is Ribosomal protein uS12 methylthiotransferase RimO.